A 482-amino-acid chain; its full sequence is Glutamyl-tRNA(Gln) amidotransferase subunit A (482 aa).

Active-site charge relay system residues include K81 and S156. Residue S180 is the Acyl-ester intermediate of the active site.

The protein belongs to the amidase family. GatA subfamily. As to quaternary structure, heterotrimer of A, B and C subunits.

The catalysed reaction is L-glutamyl-tRNA(Gln) + L-glutamine + ATP + H2O = L-glutaminyl-tRNA(Gln) + L-glutamate + ADP + phosphate + H(+). In terms of biological role, allows the formation of correctly charged Gln-tRNA(Gln) through the transamidation of misacylated Glu-tRNA(Gln) in organisms which lack glutaminyl-tRNA synthetase. The reaction takes place in the presence of glutamine and ATP through an activated gamma-phospho-Glu-tRNA(Gln). This Brachyspira hyodysenteriae (strain ATCC 49526 / WA1) protein is Glutamyl-tRNA(Gln) amidotransferase subunit A.